Reading from the N-terminus, the 123-residue chain is NHL-repeat-containing protein 4 (123 aa).

NHL repeat units follow at residues 35–78 and 79–119; these read QPLG…FPRA and GPPI…YQGL.

This is NHL-repeat-containing protein 4 (NHLRC4) from Homo sapiens (Human).